A 73-amino-acid chain; its full sequence is Neurotoxin Cex13 (73 aa).

The first 7 residues, 1-7 (ATGNVWA), serve as a signal peptide directing secretion. In terms of domain architecture, LCN-type CS-alpha/beta spans 8-71 (KDGYLVIIKT…TWPLPDKTCG (64 aa)). 4 disulfide bridges follow: C19–C70, C23–C46, C32–C51, and C36–C53. C70 carries the cysteine amide modification. Positions 71 to 73 (GTK) are excised as a propeptide.

This sequence belongs to the long (4 C-C) scorpion toxin superfamily. Sodium channel inhibitor family. Beta subfamily. As to expression, expressed by the venom gland.

Its subcellular location is the secreted. Functionally, beta toxins bind voltage-independently at site-4 of sodium channels (Nav) and shift the voltage of activation toward more negative potentials thereby affecting sodium channel activation and promoting spontaneous and repetitive firing. This is Neurotoxin Cex13 from Centruroides exilicauda (Bark scorpion).